The sequence spans 447 residues: N-succinylarginine dihydrolase (447 aa).

Residues 19–28 (AGLSFGNEAS), N110, and 137–138 (HR) each bind substrate. E174 is a catalytic residue. R212 is a binding site for substrate. H248 is an active-site residue. The substrate site is built by D250 and N359. The active-site Nucleophile is the C365.

It belongs to the succinylarginine dihydrolase family. In terms of assembly, homodimer.

It carries out the reaction N(2)-succinyl-L-arginine + 2 H2O + 2 H(+) = N(2)-succinyl-L-ornithine + 2 NH4(+) + CO2. It functions in the pathway amino-acid degradation; L-arginine degradation via AST pathway; L-glutamate and succinate from L-arginine: step 2/5. Catalyzes the hydrolysis of N(2)-succinylarginine into N(2)-succinylornithine, ammonia and CO(2). This chain is N-succinylarginine dihydrolase, found in Escherichia coli O7:K1 (strain IAI39 / ExPEC).